The sequence spans 362 residues: 3-dehydroquinate synthase (362 aa).

The protein belongs to the archaeal-type DHQ synthase family.

The enzyme catalyses 2-amino-2,3,7-trideoxy-D-lyxo-hept-6-ulosonate + NAD(+) + H2O = 3-dehydroquinate + NH4(+) + NADH + H(+). In terms of biological role, catalyzes the oxidative deamination and cyclization of 2-amino-3,7-dideoxy-D-threo-hept-6-ulosonic acid (ADH) to yield 3-dehydroquinate (DHQ), which is fed into the canonical shikimic pathway of aromatic amino acid biosynthesis. In Methanococcus aeolicus (strain ATCC BAA-1280 / DSM 17508 / OCM 812 / Nankai-3), this protein is 3-dehydroquinate synthase.